The primary structure comprises 1038 residues: Pentatricopeptide repeat-containing protein At5g27270 (1038 aa).

Positions 23–38 (SRNSRISIKSSSSSSK) are enriched in low complexity. The tract at residues 23 to 69 (SRNSRISIKSSSSSSKVRPDPWSLSDGNPEKPKPRYERPKHPLSDDD) is disordered. The segment covering 50-69 (NPEKPKPRYERPKHPLSDDD) has biased composition (basic and acidic residues). PPR repeat units follow at residues 187 to 221 (SVVV…GCEP), 222 to 256 (DAVA…RILL), 257 to 291 (STSV…GVPP), 292 to 326 (NEFT…GFVP), 327 to 361 (EEVT…GIVP), 362 to 396 (SNYT…KIPA), 397 to 431 (DEVI…NLLA), 432 to 466 (DEKT…DIPL), 467 to 501 (SRFA…GLPD), 502 to 535 (ASSC…QVHF), 536 to 570 (DIEL…ARVK), 601 to 631 (DVMA…MFKT), 634 to 668 (GSSA…GLRM), 669 to 699 (EEET…AGES), 703 to 737 (GKSV…GCDP), 738 to 772 (GAVT…NIEL), 773 to 807 (DTVG…GVPC), 808 to 842 (SIQT…GLYL), 843 to 877 (DEKI…GIKP), 878 to 912 (GTPS…GRCT), 913 to 947 (DLST…GIPL), 948 to 982 (SHSH…GISP), and 983 to 1017 (DSAC…SVED).

This sequence belongs to the PPR family. P subfamily.

The protein is Pentatricopeptide repeat-containing protein At5g27270 (EMB976) of Arabidopsis thaliana (Mouse-ear cress).